We begin with the raw amino-acid sequence, 259 residues long: Dihydroorotate dehydrogenase B (NAD(+)), electron transfer subunit (259 aa).

Residues 2–102 form the FAD-binding FR-type domain; sequence MQKQNMIVVN…LGPLGHGFPV (101 aa). FAD-binding positions include 53-56, 70-72, and 77-78; these read RPIS, LYR, and GT. Cysteine 221, cysteine 226, cysteine 229, and cysteine 246 together coordinate [2Fe-2S] cluster.

This sequence belongs to the PyrK family. Heterotetramer of 2 PyrK and 2 PyrD type B subunits. [2Fe-2S] cluster is required as a cofactor. FAD serves as cofactor.

It participates in pyrimidine metabolism; UMP biosynthesis via de novo pathway; orotate from (S)-dihydroorotate (NAD(+) route): step 1/1. Responsible for channeling the electrons from the oxidation of dihydroorotate from the FMN redox center in the PyrD type B subunit to the ultimate electron acceptor NAD(+). This Bacillus mycoides (strain KBAB4) (Bacillus weihenstephanensis) protein is Dihydroorotate dehydrogenase B (NAD(+)), electron transfer subunit.